Consider the following 477-residue polypeptide: Serine/threonine-protein kinase pakC (477 aa).

The region spanning 13-108 is the PH domain; that stretch reads SPDKEGELKK…WMKAVEKGSE (96 aa). Residues 112-125 enclose the CRIB domain; the sequence is VSQPFNLKHEVHVD. A Protein kinase domain is found at 204-458; sequence YKNMTKIGEG…ATDLLKHPFM (255 aa). ATP is bound by residues 210–218 and lysine 233; that span reads IGEGAAGEV. Aspartate 326 acts as the Proton acceptor in catalysis.

The protein belongs to the protein kinase superfamily. STE Ser/Thr protein kinase family. STE20 subfamily. Interacts with GTP-bound racB. The cofactor is Mg(2+).

It is found in the cytoplasm. Its subcellular location is the membrane. It carries out the reaction L-seryl-[protein] + ATP = O-phospho-L-seryl-[protein] + ADP + H(+). The catalysed reaction is L-threonyl-[protein] + ATP = O-phospho-L-threonyl-[protein] + ADP + H(+). Its activity is regulated as follows. Kinase activity is rapidly and transiently increased in response to chemoattractant stimulation. Its function is as follows. Has role in the regulation of chemotaxis. In Dictyostelium discoideum (Social amoeba), this protein is Serine/threonine-protein kinase pakC (pakC).